A 596-amino-acid chain; its full sequence is MSSNEAYHEPGAGGDGPGGSSGASGGGSQRSNQLHHQQILNETTYLKPAAKQAYFSDEKVLIPDDDSTNVGFSFRKLWAFTGPGFLMSIAYLDPGNIESDMQSGAAAKYKILWVLLWATVLGLLMQRLAARLGVVTGLHLAEMCYRQYKRLPRWILWIMIEIAIIGSDMQEVIGTAIAIYLLSNKVVPLWGGVLITIVDTFTFLFLDKYGLRKLEFLFGTLITIMAVSFGYEYIVSAPNQGEVLEGMFVPWCSNCNSNVLLQAVGVVGAVIMPHNLYLHSALVKSRDIDRRQTKKVSEANFYFFIEASVALFVSFIINLFVVAVFAHGMYGKTNNDVVEVCKDKSMYEDAKMSFVDNVNGTAIIDADLYKGGLFLGCTFGAVAMYIWGVGILAAGQSSTMTGTYAGQFSMEGFLNLQWPRWCRVLVTRCIAIIPTFCLAMFSKMEDLTSMNDILNAVMSLQLPFAAIPTIAFTSCAAIMGEFVNGLGNKIVSILLTIVVIGVNLYFVVVQVENMEIKGGLLALVCIFAILYILFNLYLVIHMAACMGNQRLMNSRWVQRFVLPSQNSFSIKNANSTYARIATSSDQEPEGLAGEDA.

Residues 1 to 34 (MSSNEAYHEPGAGGDGPGGSSGASGGGSQRSNQL) form a disordered region. Residues 11–28 (GAGGDGPGGSSGASGGGS) show a composition bias toward gly residues. N41 carries an N-linked (GlcNAc...) asparagine glycan. A run of 7 helical transmembrane segments spans residues 77 to 97 (LWAF…PGNI), 105 to 125 (AAAK…GLLM), 154 to 174 (WILW…EVIG), 186 to 206 (VVPL…FLFL), 216 to 236 (FLFG…YIVS), 263 to 283 (AVGV…SALV), and 309 to 329 (VALF…AHGM). A glycan (N-linked (GlcNAc...) asparagine) is linked at N359. 5 consecutive transmembrane segments (helical) span residues 373–393 (LFLG…GILA), 424–444 (VLVT…FSKM), 463–483 (PFAA…GEFV), 490–510 (IVSI…VVVQ), and 520–540 (LLAL…YLVI). A glycan (N-linked (GlcNAc...) asparagine) is linked at N574.

This sequence belongs to the NRAMP family. Expressed in macrophages and in the nervous system.

It localises to the membrane. Putative transporter required for normal taste behavior. May be a nitrite/nitrate transporter. This is Protein Malvolio (Mvl) from Drosophila melanogaster (Fruit fly).